The following is a 332-amino-acid chain: Cell growth regulator with RING finger domain protein 1 (332 aa).

The RING-type zinc-finger motif lies at 274-309; sequence CVVCQNGGVNWVLLPCRHACLCDSCVRYFKQCPMCR.

It localises to the nucleus. The protein localises to the endoplasmic reticulum. Able to inhibit growth in several cell lines. This chain is Cell growth regulator with RING finger domain protein 1 (Cgrrf1), found in Mus musculus (Mouse).